We begin with the raw amino-acid sequence, 115 residues long: C-C motif chemokine 6 (115 aa).

Positions 1 to 21 are cleaved as a signal peptide; it reads MRHSKTAISFFILVAVLGSQA. 3 disulfides stabilise this stretch: C49/C72, C50/C88, and C59/C99.

Belongs to the intercrine beta (chemokine CC) family.

It is found in the secreted. The chain is C-C motif chemokine 6 (Ccl6) from Rattus norvegicus (Rat).